Consider the following 153-residue polypeptide: Small ribosomal subunit protein uS7c (153 aa).

The protein belongs to the universal ribosomal protein uS7 family. Part of the 30S ribosomal subunit.

The protein resides in the plastid. Functionally, one of the primary rRNA binding proteins, it binds directly to 16S rRNA where it nucleates assembly of the head domain of the 30S subunit. The chain is Small ribosomal subunit protein uS7c (rps7) from Helicosporidium sp. subsp. Simulium jonesii (Green alga).